The following is a 376-amino-acid chain: Putative F-box protein At3g18330 (376 aa).

One can recognise an F-box domain in the interval 1–46 (MPMPNLPKELVEEILSFVPATYLKRLSATCKPWNRLIHNDKRFARK).

This Arabidopsis thaliana (Mouse-ear cress) protein is Putative F-box protein At3g18330.